The primary structure comprises 275 residues: Mitochondrial outer membrane protein porin (275 aa).

Met-1 carries the blocked amino end (Met) modification.

It belongs to the eukaryotic mitochondrial porin family. Highly divergent.

The protein localises to the mitochondrion outer membrane. Forms a channel of about 1,7 nM through the cell membrane that allows diffusion of small hydrophilic molecules. The channel adopts an open conformation at low or zero membrane potential and a closed conformation at potentials above 20 mv. The open state has a weak anion selectivity whereas the closed state is cation-selective. The protein is Mitochondrial outer membrane protein porin (porA) of Dictyostelium discoideum (Social amoeba).